Consider the following 89-residue polypeptide: Small ribosomal subunit protein uS15 (89 aa).

Belongs to the universal ribosomal protein uS15 family. Part of the 30S ribosomal subunit. Forms a bridge to the 50S subunit in the 70S ribosome, contacting the 23S rRNA.

One of the primary rRNA binding proteins, it binds directly to 16S rRNA where it helps nucleate assembly of the platform of the 30S subunit by binding and bridging several RNA helices of the 16S rRNA. In terms of biological role, forms an intersubunit bridge (bridge B4) with the 23S rRNA of the 50S subunit in the ribosome. This chain is Small ribosomal subunit protein uS15, found in Mycobacterium sp. (strain JLS).